The sequence spans 333 residues: tRNA-modifying protein YgfZ (333 aa).

2 residues coordinate folate: Trp-33 and Trp-195.

This sequence belongs to the tRNA-modifying YgfZ family.

The protein resides in the cytoplasm. Folate-binding protein involved in regulating the level of ATP-DnaA and in the modification of some tRNAs. It is probably a key factor in regulatory networks that act via tRNA modification, such as initiation of chromosomal replication. The sequence is that of tRNA-modifying protein YgfZ from Pectobacterium atrosepticum (strain SCRI 1043 / ATCC BAA-672) (Erwinia carotovora subsp. atroseptica).